Consider the following 273-residue polypeptide: Esterase pigG (273 aa).

Active-site charge relay system residues include S122, D215, and H243.

Belongs to the LovG family.

It participates in secondary metabolite biosynthesis. Functionally, esterase; part of the gene cluster that mediates the biosynthesis of azaphilone pigments (MonAzPs), a complex mixture of compounds with a common azaphilone skeleton very widely used as food colorants. Within the pathway, pigG may assist the nrPKS pigA in the biosynthesis of the hexaketide precursor. The first step of the pathway is performed by the nrPKS pigA that forms the hexaketide precursor from successive condensations of five malonyl-CoA units, with a simple acetyl-CoA starter unit. The role of esterase pigG is not clear, but it may play at most a supplementary role in the formation of the benzaldehyde produced by the pigA nrPKS. This very reactive benzaldehyde is intercepted by the pigC ketoreductase that to provide the first stable enzyme-free MonAzPs intermediate, 6-(4-hydroxy-2-oxopentyl)-3-methyl-2,4-dioxocyclohexane carbaldehyde, also known as M7PKS-1. The FAD-dependent monooxygenase pigN hydroxylates M7PKS-1 at C-4, which triggers the formation of the pyran ring. PigJ, pigK and pigD are involved in the acetylation of the pyran ring. PigJ and pigK form the two subunits of a dedicated fungal FAS that produces the side chain fatty acyl moiety of MonAzPs and pigD transfers the fatty acyl chain to the C-4 alcohol. PigM and pigO are involved in the elimination of the omega-1 alcohol. PigM acts as an O-acetyltransferase that synthesizes the putative O-11 acetyl intermediate whereas pigO eliminates acetic acid to yield an intermediate with a C10(11) double bond. The dehydration of the C-11 alcohol followed by the reduction of the C6(7) double bond by the NAD(P)H-dependent oxidoreductase pigE increases the electrophilicity of the C-5 ketone of the resulting acyl benzopyran. This in turn sets up the C-5 ketone for an intramolecular Knoevenagel aldol condensation with the C-20 enol of the side chain. This condensation affords the characteristic linear tricyclic carbon skeletons of the yellow pigments that serve as the common precursors for the classical yellow pigments monascin and ankaflavin, orange pigments rubopunctatin and monascorubrin, and red pigments ribropunctamine and monascorubramine. The FAD-dependent oxidoreductase pigF is especially invoved in the biosynthesis of orange and red pigments via desaturation of C6(7). The sequence is that of Esterase pigG from Monascus ruber (Mold).